Here is a 101-residue protein sequence, read N- to C-terminus: NADH-quinone oxidoreductase subunit K (101 aa).

The next 3 helical transmembrane spans lie at leucine 4–valine 24, isoleucine 30–phenylalanine 50, and isoleucine 61–leucine 81.

The protein belongs to the complex I subunit 4L family. As to quaternary structure, NDH-1 is composed of 14 different subunits. Subunits NuoA, H, J, K, L, M, N constitute the membrane sector of the complex.

The protein localises to the cell inner membrane. It catalyses the reaction a quinone + NADH + 5 H(+)(in) = a quinol + NAD(+) + 4 H(+)(out). Functionally, NDH-1 shuttles electrons from NADH, via FMN and iron-sulfur (Fe-S) centers, to quinones in the respiratory chain. The immediate electron acceptor for the enzyme in this species is believed to be ubiquinone. Couples the redox reaction to proton translocation (for every two electrons transferred, four hydrogen ions are translocated across the cytoplasmic membrane), and thus conserves the redox energy in a proton gradient. The chain is NADH-quinone oxidoreductase subunit K from Caulobacter vibrioides (strain ATCC 19089 / CIP 103742 / CB 15) (Caulobacter crescentus).